We begin with the raw amino-acid sequence, 1793 residues long: Transposon Ty1-H Gag-Pol polyprotein (1793 aa).

Composition is skewed to polar residues over residues 1-10, 48-60, and 127-152; these read MESQQLSNYP, TKAN…TPAS, and QSQF…GNTF. Disordered stretches follow at residues 1 to 84, 126 to 174, and 390 to 459; these read MESQ…QNGP, PQSQ…PPPM, and GSRN…SKST. Residues 153–165 show a composition bias toward low complexity; that stretch reads TDSSSADSDMTST. The tract at residues 337–439 is RNA-binding; it reads NNGIHINNKV…NSKSKTARAH (103 aa). Residues 440–456 are compositionally biased toward low complexity; that stretch reads NVSTSNNSPSTDNDSIS. Residue Asp-499 is the For protease activity; shared with dimeric partner of the active site. Residues 621–678 form an integrase-type zinc finger-like region; it reads NVHTSESTRKYPYPFIHRMLAHANAQTIRYSLKNNTITYFNESDVDWSSAIDYQCPDC. Residues 698–873 form the Integrase catalytic domain; that stretch reads NSYEPFQYLH…AGLDISTLLP (176 aa). Mg(2+)-binding residues include Asp-709 and Asp-774. Positions 996 to 1208 are disordered; sequence AVSPTDSTPP…SSLGGIGDSN (213 aa). Residues 998 to 1007 are compositionally biased toward low complexity; it reads SPTDSTPPST. Residues 1043–1053 are compositionally biased toward polar residues; the sequence is STPQISDIEST. A compositionally biased stretch (basic and acidic residues) spans 1076-1091; the sequence is ESSHASKSKDFRHSDS. Composition is skewed to polar residues over residues 1092–1120 and 1133–1144; these read YSDN…QTSE and SIDTSSSESNSL. Positions 1216–1250 match the Bipartite nuclear localization signal motif; sequence KKRSLEDNETEIKVSRDTWNTKNMRSLEPPRSKKR. Residues 1376–1514 enclose the Reverse transcriptase Ty1/copia-type domain; it reads NNYYITQLDI…DILGLEIKYQ (139 aa). Asp-1384, Asp-1465, Asp-1466, Asp-1648, Glu-1690, and Asp-1723 together coordinate Mg(2+). One can recognise an RNase H Ty1/copia-type domain in the interval 1648–1790; the sequence is DASYGNQPYY…IKTFKLLTNK (143 aa).

In terms of assembly, the capsid protein forms a homotrimer, from which the VLPs are assembled. The protease is a homodimer, whose active site consists of two apposed aspartic acid residues. Post-translationally, initially, virus-like particles (VLPs) are composed of the structural unprocessed proteins Gag and Gag-Pol, and also contain the host initiator methionine tRNA (tRNA(i)-Met) which serves as a primer for minus-strand DNA synthesis, and a dimer of genomic Ty RNA. Processing of the polyproteins occurs within the particle and proceeds by an ordered pathway, called maturation. First, the protease (PR) is released by autocatalytic cleavage of the Gag-Pol polyprotein yielding capsid protein p45 and a Pol-p154 precursor protein. This cleavage is a prerequisite for subsequent processing of Pol-p154 at the remaining sites to release the mature structural and catalytic proteins. Maturation takes place prior to the RT reaction and is required to produce transposition-competent VLPs.

It localises to the cytoplasm. It is found in the nucleus. The catalysed reaction is DNA(n) + a 2'-deoxyribonucleoside 5'-triphosphate = DNA(n+1) + diphosphate. The enzyme catalyses Endonucleolytic cleavage to 5'-phosphomonoester.. Its function is as follows. Capsid protein (CA) is the structural component of the virus-like particle (VLP), forming the shell that encapsulates the retrotransposons dimeric RNA genome. The particles are assembled from trimer-clustered units and there are holes in the capsid shells that allow for the diffusion of macromolecules. CA also has nucleocapsid-like chaperone activity, promoting primer tRNA(i)-Met annealing to the multipartite primer-binding site (PBS), dimerization of Ty1 RNA and initiation of reverse transcription. The aspartyl protease (PR) mediates the proteolytic cleavages of the Gag and Gag-Pol polyproteins after assembly of the VLP. Functionally, reverse transcriptase/ribonuclease H (RT) is a multifunctional enzyme that catalyzes the conversion of the retro-elements RNA genome into dsDNA within the VLP. The enzyme displays a DNA polymerase activity that can copy either DNA or RNA templates, and a ribonuclease H (RNase H) activity that cleaves the RNA strand of RNA-DNA heteroduplexes during plus-strand synthesis and hydrolyzes RNA primers. The conversion leads to a linear dsDNA copy of the retrotransposon that includes long terminal repeats (LTRs) at both ends. In terms of biological role, integrase (IN) targets the VLP to the nucleus, where a subparticle preintegration complex (PIC) containing at least integrase and the newly synthesized dsDNA copy of the retrotransposon must transit the nuclear membrane. Once in the nucleus, integrase performs the integration of the dsDNA into the host genome. The polypeptide is Transposon Ty1-H Gag-Pol polyprotein (TY1B-H) (Saccharomyces cerevisiae (strain ATCC 204508 / S288c) (Baker's yeast)).